Consider the following 127-residue polypeptide: Calcitonin gene-related peptide 2 (127 aa).

The N-terminal stretch at 1–25 (MGFRKFSPFLALSILVLYQAGSLQA) is a signal peptide. A propeptide spanning residues 26-79 (APFRSALESSPDPATLSKEDARLLLAALVQDYVQMKASELKQEQETQGSSSAAQ) is cleaved from the precursor. An intrachain disulfide couples cysteine 83 to cysteine 88. Phenylalanine 118 is subject to Phenylalanine amide. The propeptide occupies 124–127 (DLQA).

It belongs to the calcitonin family. In terms of tissue distribution, expressed in spinal cord, pituitary and thalamus.

The protein localises to the secreted. Functionally, CALCB/CGRP2 is a peptide hormone that induces vasodilation mediated by the CALCRL-RAMP1 receptor complex. Dilates a variety of vessels including the coronary, cerebral and systemic vasculature. Its abundance in the CNS also points toward a neurotransmitter or neuromodulator role. In Homo sapiens (Human), this protein is Calcitonin gene-related peptide 2.